Consider the following 218-residue polypeptide: C-type lectin domain family 2 member H (218 aa).

Over M1–C52 the chain is Cytoplasmic. Residues C53–V73 form a helical; Signal-anchor for type II membrane protein membrane-spanning segment. The Extracellular segment spans residues R74–V218. C90 and C101 form a disulfide bridge. Residues F97–S201 form the C-type lectin domain. N110 is a glycosylation site (N-linked (GlcNAc...) asparagine). Residues C118 and C200 are joined by a disulfide bond.

In terms of tissue distribution, detected in ileum, liver, kidney and in IL2-activated natural killer cells.

The protein resides in the cell membrane. Functionally, lectin-type cell surface receptor. In Mus musculus (Mouse), this protein is C-type lectin domain family 2 member H (Clec2h).